The following is a 503-amino-acid chain: ATP synthase subunit alpha (503 aa).

An ATP-binding site is contributed by 170 to 177 (GDRKTGKT).

The protein belongs to the ATPase alpha/beta chains family. As to quaternary structure, F-type ATPases have 2 components, CF(1) - the catalytic core - and CF(0) - the membrane proton channel. CF(1) has five subunits: alpha(3), beta(3), gamma(1), delta(1), epsilon(1). CF(0) has four main subunits: a, b, b' and c.

The protein resides in the cellular thylakoid membrane. The catalysed reaction is ATP + H2O + 4 H(+)(in) = ADP + phosphate + 5 H(+)(out). Its function is as follows. Produces ATP from ADP in the presence of a proton gradient across the membrane. The alpha chain is a regulatory subunit. The protein is ATP synthase subunit alpha of Gloeothece citriformis (strain PCC 7424) (Cyanothece sp. (strain PCC 7424)).